Consider the following 335-residue polypeptide: Protein-lysine N-methyltransferase EEF2KMT (335 aa).

Methionine 1 is subject to N-acetylmethionine. S-adenosyl-L-methionine contacts are provided by residues tryptophan 139, 165 to 167 (GSG), tryptophan 228, and alanine 247.

Belongs to the class I-like SAM-binding methyltransferase superfamily. EEF2KMT family. In terms of assembly, interacts with FAM86B2 and FAM86C1P.

The protein resides in the cytoplasm. It catalyses the reaction L-lysyl-[protein] + 3 S-adenosyl-L-methionine = N(6),N(6),N(6)-trimethyl-L-lysyl-[protein] + 3 S-adenosyl-L-homocysteine + 3 H(+). Catalyzes the trimethylation of eukaryotic elongation factor 2 (EEF2) on 'Lys-525'. The protein is Protein-lysine N-methyltransferase EEF2KMT (Eef2kmt) of Mus musculus (Mouse).